The chain runs to 36 residues: MTASYLPSILVPLVGLVFPAITLASLFIYIEQDEIV.

The helical transmembrane segment at 7-29 threads the bilayer; it reads PSILVPLVGLVFPAITLASLFIY.

Belongs to the PsaI family.

The protein localises to the plastid. The protein resides in the chloroplast thylakoid membrane. May help in the organization of the PsaL subunit. The chain is Photosystem I reaction center subunit VIII from Anthoceros angustus (Hornwort).